A 214-amino-acid polypeptide reads, in one-letter code: ATP phosphoribosyltransferase (214 aa).

Belongs to the ATP phosphoribosyltransferase family. Short subfamily. In terms of assembly, heteromultimer composed of HisG and HisZ subunits.

The protein resides in the cytoplasm. It carries out the reaction 1-(5-phospho-beta-D-ribosyl)-ATP + diphosphate = 5-phospho-alpha-D-ribose 1-diphosphate + ATP. The protein operates within amino-acid biosynthesis; L-histidine biosynthesis; L-histidine from 5-phospho-alpha-D-ribose 1-diphosphate: step 1/9. Its function is as follows. Catalyzes the condensation of ATP and 5-phosphoribose 1-diphosphate to form N'-(5'-phosphoribosyl)-ATP (PR-ATP). Has a crucial role in the pathway because the rate of histidine biosynthesis seems to be controlled primarily by regulation of HisG enzymatic activity. This is ATP phosphoribosyltransferase from Methylobacillus flagellatus (strain ATCC 51484 / DSM 6875 / VKM B-1610 / KT).